A 449-amino-acid chain; its full sequence is Heterogeneous nuclear ribonucleoprotein H (449 aa).

N-acetylmethionine is present on Met1. Met2 carries the N-acetylmethionine; in Heterogeneous nuclear ribonucleoprotein H, N-terminally processed modification. The region spanning 11-90 (FVVKVRGLPW…RYVEVFKSNN (80 aa)) is the RRM 1 domain. Ser23 carries the post-translational modification Phosphoserine. Residue Lys35 forms a Glycyl lysine isopeptide (Lys-Gly) (interchain with G-Cter in SUMO2) linkage. Ser54 and Ser63 each carry phosphoserine. Glycyl lysine isopeptide (Lys-Gly) (interchain with G-Cter in SUMO2) cross-links involve residues Lys87 and Lys98. The 78-residue stretch at 111–188 (GFVRLRGLPF…RYIEIFKSSR (78 aa)) folds into the RRM 2 domain. Residue Arg233 is modified to Dimethylated arginine; alternate. Arg233 carries the post-translational modification Omega-N-methylarginine; alternate. The stretch at 234–249 (GAYGGGYGGYDDYNGY) is one 1-1 repeat. The interval 234–433 (GAYGGGYGGY…YGGQSSMSGY (200 aa)) is 2 X 16 AA Gly-rich approximate repeats. Tyr246 bears the Phosphotyrosine mark. An RRM 3 domain is found at 289–364 (HCVHMRGLPY…RYVELFLNST (76 aa)). At Ser310 the chain carries Phosphoserine. 3 repeat units span residues 354–372 (HRYVELFLNSTAGASGGAY), 374–392 (HRYVELFLNSTAGASGGAY), and 418–433 (GGYGGGYGGQSSMSGY). The interval 354–392 (HRYVELFLNSTAGASGGAYEHRYVELFLNSTAGASGGAY) is 2 X 19 AA perfect repeats.

As to quaternary structure, part of a ternary complex containing FUBP2, PTBP1, PTBP2 and HNRNPH1. Identified in the spliceosome C complex. Interacts with IGF2BP1. Interacts with CUGBP1; the interaction is RNA-dependent. Interacts with MBNL1; the interaction in RNA-independent.

The protein localises to the nucleus. It is found in the nucleoplasm. Its function is as follows. This protein is a component of the heterogeneous nuclear ribonucleoprotein (hnRNP) complexes which provide the substrate for the processing events that pre-mRNAs undergo before becoming functional, translatable mRNAs in the cytoplasm. Mediates pre-mRNA alternative splicing regulation. Inhibits, together with CUGBP1, insulin receptor (IR) pre-mRNA exon 11 inclusion in myoblast. Binds to the IR RNA. Binds poly(RG). This is Heterogeneous nuclear ribonucleoprotein H (Hnrnph1) from Rattus norvegicus (Rat).